Reading from the N-terminus, the 364-residue chain is G-protein coupled receptor 4 (364 aa).

Residues 1–8 (MCNVSQDS) are Extracellular-facing. N3 is a glycosylation site (N-linked (GlcNAc...) asparagine). The helical transmembrane segment at 9–45 (CNIDSRLDSLFPPTLYIFVMVIGFPTNCLSLWAAFVQ) threads the bilayer. Intrachain disulfides connect C9-C258 and C90-C168. Residues 46-49 (VRQK) are Cytoplasmic-facing. The chain crosses the membrane as a helical span at residues 50-80 (NELGVYLLNLSISDLLYIATLPPWVNYFLHQ). At 81–85 (DNWIH) the chain is on the extracellular side. A helical membrane pass occupies residues 86–121 (GPESCKLFGFILYTNIYISIGFLSCISVDRYLAVAH). Over 122 to 129 (PLKFAKVR) the chain is Cytoplasmic. A helical transmembrane segment spans residues 130–156 (RVKTAAVVSAVVWAIEIGANSAPLFHN). Residues 157 to 172 (ELFEDRFNHTFCFEKY) lie on the Extracellular side of the membrane. The tract at residues 157–172 (ELFEDRFNHTFCFEKY) is extracellular loop 2 (ECL2). N164 carries N-linked (GlcNAc...) asparagine glycosylation. Residues 173-210 (PMEDWVAQMNLYRVFVGFLFPWVLMLFCYQGILRAVKT) form a helical membrane-spanning segment. Residues 211-214 (NVST) are Cytoplasmic-facing. A helical transmembrane segment spans residues 215-250 (EREEKAKIKRLALSLIAILLFCFAPYHLILLSRSVV). Over 251 to 260 (YLGQPCDCTF) the chain is Extracellular. Residues 261 to 289 (EENIFTAYHVSLALTSLNCVADPILYCLA) traverse the membrane as a helical segment. Over 290–364 (NEGARSEVTR…RVRRRRDCKC (75 aa)) the chain is Cytoplasmic.

It belongs to the G-protein coupled receptor 1 family.

The protein localises to the cell membrane. Its activity is regulated as follows. Activated by a network of residues that connects an extracellular-facing cavity to Glu-145, a conserved charged residue buried in the transmembrane core of the receptor. Protonation likely drives conformational changes in extracellular loop 2 (ECL2), which stabilizes movement of transmembrane 3 (TM3) and a series of rearrangements that connect the extracellular-facing cavity to Glu-145, a residue only conserved in proton-sensing G-protein coupled receptors. Functionally, proton-sensing G-protein coupled receptor activated by extracellular pH, which is required to monitor pH changes and generate adaptive reactions. Ligand binding causes a conformation change that triggers signaling via guanine nucleotide-binding proteins (G proteins) and modulates the activity of downstream effectors, such as adenylate cyclase. The sequence is that of G-protein coupled receptor 4 from Callorhinchus milii (Ghost shark).